The primary structure comprises 150 residues: SsrA-binding protein (150 aa).

The protein belongs to the SmpB family.

It localises to the cytoplasm. Its function is as follows. Required for rescue of stalled ribosomes mediated by trans-translation. Binds to transfer-messenger RNA (tmRNA), required for stable association of tmRNA with ribosomes. tmRNA and SmpB together mimic tRNA shape, replacing the anticodon stem-loop with SmpB. tmRNA is encoded by the ssrA gene; the 2 termini fold to resemble tRNA(Ala) and it encodes a 'tag peptide', a short internal open reading frame. During trans-translation Ala-aminoacylated tmRNA acts like a tRNA, entering the A-site of stalled ribosomes, displacing the stalled mRNA. The ribosome then switches to translate the ORF on the tmRNA; the nascent peptide is terminated with the 'tag peptide' encoded by the tmRNA and targeted for degradation. The ribosome is freed to recommence translation, which seems to be the essential function of trans-translation. This Coprothermobacter proteolyticus (strain ATCC 35245 / DSM 5265 / OCM 4 / BT) protein is SsrA-binding protein.